Here is a 267-residue protein sequence, read N- to C-terminus: Hydroxyethylthiazole kinase (267 aa).

Met-42 lines the substrate pocket. Positions 118 and 162 each coordinate ATP. Gly-189 contributes to the substrate binding site.

The protein belongs to the Thz kinase family. The cofactor is Mg(2+).

It carries out the reaction 5-(2-hydroxyethyl)-4-methylthiazole + ATP = 4-methyl-5-(2-phosphooxyethyl)-thiazole + ADP + H(+). It participates in cofactor biosynthesis; thiamine diphosphate biosynthesis; 4-methyl-5-(2-phosphoethyl)-thiazole from 5-(2-hydroxyethyl)-4-methylthiazole: step 1/1. In terms of biological role, catalyzes the phosphorylation of the hydroxyl group of 4-methyl-5-beta-hydroxyethylthiazole (THZ). The sequence is that of Hydroxyethylthiazole kinase from Rubrobacter xylanophilus (strain DSM 9941 / JCM 11954 / NBRC 16129 / PRD-1).